The following is a 117-amino-acid chain: Holo-[acyl-carrier-protein] synthase (117 aa).

Mg(2+)-binding residues include D6 and E55.

This sequence belongs to the P-Pant transferase superfamily. AcpS family. The cofactor is Mg(2+).

Its subcellular location is the cytoplasm. The enzyme catalyses apo-[ACP] + CoA = holo-[ACP] + adenosine 3',5'-bisphosphate + H(+). Functionally, transfers the 4'-phosphopantetheine moiety from coenzyme A to a Ser of acyl-carrier-protein. The protein is Holo-[acyl-carrier-protein] synthase of Chlorobaculum parvum (strain DSM 263 / NCIMB 8327) (Chlorobium vibrioforme subsp. thiosulfatophilum).